A 330-amino-acid chain; its full sequence is Olfactory receptor 5P70 (330 aa).

Over Met-1 to Asp-28 the chain is Extracellular. A glycan (N-linked (GlcNAc...) asparagine) is linked at Asn-8. A helical membrane pass occupies residues Ile-29–Ile-49. Topologically, residues Leu-50–Gln-57 are cytoplasmic. The helical transmembrane segment at Leu-58–Ser-78 threads the bilayer. At Ser-79–Ile-102 the chain is on the extracellular side. Cys-100 and Cys-192 are oxidised to a cystine. The chain crosses the membrane as a helical span at residues Gln-103–Tyr-123. The Cytoplasmic segment spans residues Asp-124–Ser-136. Residues Thr-137–Leu-157 traverse the membrane as a helical segment. Over Asn-158–Val-199 the chain is Extracellular. The chain crosses the membrane as a helical span at residues Val-200 to Ser-220. Residues Tyr-221 to Ala-240 are Cytoplasmic-facing. A helical membrane pass occupies residues Phe-241 to Ile-261. The Extracellular segment spans residues Tyr-262 to Asn-274. A helical membrane pass occupies residues Lys-275 to Leu-295. Topologically, residues Arg-296–Val-330 are cytoplasmic.

Belongs to the G-protein coupled receptor 1 family.

The protein localises to the cell membrane. Functionally, potential odorant receptor. The chain is Olfactory receptor 5P70 from Mus musculus (Mouse).